Reading from the N-terminus, the 306-residue chain is MGKSRILIIGATGYIGRQVAKASAALGHPTLILVRETTASNPEKAQLLESFKSSGITIVHGSLEDHASLVEAIKKVDVVISTVGGAQIADQLNIIKAIKEVGTIKRFLPTEFGNDVDKTSAVEPAKGLFALKVKIRRAIEAEGIPYTYVSSNCFAGYFLPNLGQPGLTAPPRDKIVIFGDGNAKAVFVKEEDIGTFTIKSVDDPRTLNKTLYLRLPANTFSFNELVALWEKKIGKTLEKVYVPEEQVLKTIAETPFPGNIIISIAHSIFVKGDQTNFEIGDNGVEGSELYPDVKYTTVDEYLNQFV.

NADP(+) contacts are provided by residues 10–16 (GATGYIG), R35, and K44. K132 (proton acceptor) is an active-site residue. NADP(+) is bound at residue R136.

It belongs to the NmrA-type oxidoreductase family. Isoflavone reductase subfamily. Highly expressed in sclerotesta. Expressed in roots, and two-to-four year stems.

It catalyses the reaction (-)-dehydrodiconiferyl alcohol + NADPH + H(+) = (S)-isodihydrodehydrodiconiferyl alcohol + NADP(+). The catalysed reaction is (+)-dehydrodiconiferyl alcohol + NADPH + H(+) = (R)-isodihydrodehydrodiconiferyl alcohol + NADP(+). The enzyme catalyses (2R,3S)-dihydrodehydrodiconiferyl alcohol + NADPH + H(+) = (S)-tetrahydrodehydrodiconiferyl alcohol + NADP(+). It carries out the reaction (2S,3R)-dihydrodehydrodiconiferyl alcohol + NADPH + H(+) = (R)-tetrahydrodehydrodiconiferyl alcohol + NADP(+). In terms of biological role, oxidoreductase involved in lignan biosynthesis. Catalyzes the NADPH-dependent reduction of phenylcoumaran benzylic ethers. Converts dehydrodiconiferyl alcohol (DDC) to isodihydrodehydrodiconiferyl alcohol (IDDDC), and dihydrodehydrodiconiferyl alcohol (DDDC) to tetrahydrodehydrodiconiferyl alcohol (TDDC). May regulate changes in lignin content and accumulation of flavonoids. The chain is Phenylcoumaran benzylic ether reductase IRL1 from Ginkgo biloba (Ginkgo).